A 164-amino-acid polypeptide reads, in one-letter code: 17.8 kDa heat shock protein (164 aa).

One can recognise a sHSP domain in the interval 20–154 (VVAGEARPPM…HAGNGKAAGD (135 aa)). Positions 68–93 (GEHEDANNAAKAGKASGEEEEENDGV) are disordered.

It belongs to the small heat shock protein (HSP20) family. In terms of assembly, may form oligomeric structures.

The protein localises to the cytoplasm. This Oryza sativa subsp. japonica (Rice) protein is 17.8 kDa heat shock protein (HSP17.8).